The chain runs to 149 residues: uncharacterized protein (149 aa).

Residues 124–144 (IIIIALIIILANYAPSIIGKI) form a helical membrane-spanning segment.

It belongs to the M.jannaschii MJ0023/MJ0349/MJ1072/MJ1074/MJ1107/MJECL16 family.

It is found in the membrane. This is an uncharacterized protein from Methanocaldococcus jannaschii (strain ATCC 43067 / DSM 2661 / JAL-1 / JCM 10045 / NBRC 100440) (Methanococcus jannaschii).